The sequence spans 724 residues: Long-chain-fatty-acid--CoA ligase ACSBG1 (724 aa).

The disordered stretch occupies residues 1-51; sequence MPRNSGAGYGCPHGDPSMLDSRETPQESRQDMTVGTTQEKLKTSSLTDRQP. Residues 20 to 30 are compositionally biased toward basic and acidic residues; it reads DSRETPQESRQ. Polar residues predominate over residues 31-51; sequence DMTVGTTQEKLKTSSLTDRQP. Ser53 and Ser56 each carry phosphoserine. Residues 282-290, 472-477, Asp550, and Arg565 contribute to the ATP site; these read TSGTTGNPK and AGYGLS. Tyr658 is modified (phosphotyrosine). Position 701 (Lys701) interacts with ATP.

This sequence belongs to the ATP-dependent AMP-binding enzyme family. Bubblegum subfamily.

The protein resides in the cytoplasm. Its subcellular location is the cytoplasmic vesicle. The protein localises to the microsome. It localises to the endoplasmic reticulum. It is found in the cell membrane. It catalyses the reaction a long-chain fatty acid + ATP + CoA = a long-chain fatty acyl-CoA + AMP + diphosphate. The enzyme catalyses (E)-hexadec-2-enoate + ATP + CoA = (2E)-hexadecenoyl-CoA + AMP + diphosphate. The catalysed reaction is hexadecanoate + ATP + CoA = hexadecanoyl-CoA + AMP + diphosphate. Catalyzes the conversion of fatty acids such as long-chain and very long-chain fatty acids to their active form acyl-CoAs for both synthesis of cellular lipids, and degradation via beta-oxidation. Can activate diverse saturated, monosaturated and polyunsaturated fatty acids. This Macaca fascicularis (Crab-eating macaque) protein is Long-chain-fatty-acid--CoA ligase ACSBG1.